Consider the following 504-residue polypeptide: ATP synthase subunit beta (504 aa).

Position 181 to 188 (G181 to T188) interacts with ATP.

It belongs to the ATPase alpha/beta chains family. In terms of assembly, F-type ATPases have 2 components, CF(1) - the catalytic core - and CF(0) - the membrane proton channel. CF(1) has five subunits: alpha(3), beta(3), gamma(1), delta(1), epsilon(1). CF(0) has three main subunits: a(1), b(2) and c(9-12). The alpha and beta chains form an alternating ring which encloses part of the gamma chain. CF(1) is attached to CF(0) by a central stalk formed by the gamma and epsilon chains, while a peripheral stalk is formed by the delta and b chains.

The protein resides in the cell inner membrane. The catalysed reaction is ATP + H2O + 4 H(+)(in) = ADP + phosphate + 5 H(+)(out). Produces ATP from ADP in the presence of a proton gradient across the membrane. The catalytic sites are hosted primarily by the beta subunits. The polypeptide is ATP synthase subunit beta (Ehrlichia ruminantium (strain Welgevonden)).